A 116-amino-acid chain; its full sequence is UPF0342 protein RBAM_010030 (116 aa).

The protein belongs to the UPF0342 family.

The polypeptide is UPF0342 protein RBAM_010030 (Bacillus velezensis (strain DSM 23117 / BGSC 10A6 / LMG 26770 / FZB42) (Bacillus amyloliquefaciens subsp. plantarum)).